Reading from the N-terminus, the 201-residue chain is Desiccation-related protein PCC3-06 (201 aa).

The segment covering 41-54 has biased composition (polar residues); the sequence is TVASQSQGRQQVSE. Disordered stretches follow at residues 41–155 and 177–201; these read TVAS…QNVK and MGKS…TNYF. 3 stretches are compositionally biased toward basic and acidic residues: residues 57–76, 108–144, and 177–193; these read EDAK…KTSE, GELK…ERVA, and MGKS…ETKK.

This sequence belongs to the LEA type 1 family.

The protein is Desiccation-related protein PCC3-06 of Craterostigma plantagineum (Blue gem).